We begin with the raw amino-acid sequence, 362 residues long: Cell death regulator Aven (362 aa).

Disordered regions lie at residues methionine 1–lysine 111, valine 214–glycine 237, and valine 253–serine 362. Basic residues predominate over residues arginine 8–arginine 17. The segment covering arginine 37–glycine 47 has biased composition (gly residues). A compositionally biased stretch (basic residues) spans arginine 50–arginine 60. Gly residues predominate over residues glycine 61–proline 72. The span at valine 90–glutamate 105 shows a compositional bias: acidic residues. At serine 94 the chain carries Phosphoserine. Lysine 230 carries the post-translational modification N6-methyllysine. Residues glutamate 350–serine 362 are compositionally biased toward acidic residues.

Binds Apaf-1, BCL-2 and BAD (Bcl-xl). As to expression, highly expressed in testis, ovary, thymus, prostate, spleen, small intestine, colon, heart, skeletal muscle, liver, kidney and pancreas.

It localises to the endomembrane system. Its function is as follows. Protects against apoptosis mediated by Apaf-1. This chain is Cell death regulator Aven (AVEN), found in Homo sapiens (Human).